Here is an 878-residue protein sequence, read N- to C-terminus: MDDDQQFCLRWNNHQSTLISVFDTLLENETLVDCTLAAEGKFLKAHKVVLSACSPYFATLLQEQYDKHPIFILKDVKYQELRAMMDYMYRGEVNISQDQLAALLKAAESLQIKGLSDNRTGGGVAPKPESSGHHRGGKLSGAYTLEQTKRARLATGGAMDTSGDVSGSREGSSSPSRRRRKVRRRSMENDAHDNSNSSVLQAAASNQSILQQTGAGLAVSALVTTQLSSGPAAGTSSQASSTQQQQPLTSTNVTKKTESAKLTSSTAAPASGASASAAVQQAHLHQQQAQTTSDAINTENVQAQSQGGAQGVQGDDEDIDEGSAVGGPNSATGPNPASASASAVHAGVVVKQLASVVDKSSSNHKHKIKDNSVSSVGSEMVIEPKAEYDDDAHDENVEDLTLDEEDMTMEELDQTAGTSQGGEGSSQTYATWQHDRSQDELGLMAQDAQQRDPQDGYWTILETVPYSIASAAPNQTLTTATTLSNGGSSLLTGATVVVELPPDDLGNPVGNIQYTIPALTKNATTNTNTTSLLHKPQATTIQIVKQQHQQQHQQQHQHPQQQHQPQQQQHRQHLTIQQSQTHARQEYIKIDTSRLEDKMLLRDVMQYGATSIAMAPQSATTTVVSTHPVESGLLLADADEAERELELEAMKVDQHDEEHLLDDEGYVIEKIHGDGETVNQPQEKLYINGMSNIIHTATTMTLQPDDCKYACNVCGKTYKIKGSLKRHKNYECGVEPNLKCPHCPHKCKCVLAQVVNFVRHGPKNQLLCQCGRYYNTLSRLMLHQREECQDFKRFQCDFCLKWFKRRSHLNRHKKLHDAELFLEPLSKQKPKTTSGQNLSHDANTDDEVATTNPAATEDESNYPFTSEIKIENEFDEFI.

The BTB domain maps to 32–97; that stretch reads VDCTLAAEGK…MYRGEVNISQ (66 aa). Disordered stretches follow at residues 115 to 200, 228 to 340, and 542 to 583; these read LSDN…SSVL, SSGP…ASAS, and QIVK…QTHA. 5 stretches are compositionally biased toward low complexity: residues 162–175, 228–251, 263–293, 329–340, and 546–569; these read SGDVSGSREGSSSP, SSGPAAGTSSQASSTQQQQPLTST, TSSTAAPASGASASAAVQQAHLHQQQAQTTS, NSATGPNPASAS, and QQHQQQHQQQHQHPQQQHQPQQQQ. Residues 709–731 form a C2H2-type 1; degenerate zinc finger; the sequence is YACNVCGKTYKIKGSLKRHKNYE. The C2H2-type 2 zinc-finger motif lies at 794 to 816; it reads FQCDFCLKWFKRRSHLNRHKKLH. Residues 826–863 are disordered; that stretch reads SKQKPKTTSGQNLSHDANTDDEVATTNPAATEDESNYP. Residues 831-841 show a composition bias toward polar residues; that stretch reads KTTSGQNLSHD.

As to expression, by stage 11, isoform W, isoform X and isoform Y are expressed throughout the mesoderm, whereas isoform O is expressed in both mesoderm and ectoderm. From stage 15, expression of isoform O expands to all tissues, whereas expression of isoform W, isoform X and isoform Y becomes restricted during later stages; starting from stage 14 to 16, isoform W, isoform X and isoform Y are expressed in muscle. From stages 14 and 15, isoform W and isoform Y are expressed in the gut. For some isoforms, expression is also seen in specific types of cells in the embryo; isoform O is expressed in the ventral furrow at stage 5 and in the dorsal epidermis from stage 7. Isoform Y shows prominent expression in the gonad starting at stage 15.

The protein resides in the nucleus. Its function is as follows. Putative transcription factor required for axon growth and guidance in the central and peripheral nervous systems. Repels CNS axons away from the midline by promoting the expression of the midline repellent sli and its receptor robo. This Drosophila melanogaster (Fruit fly) protein is Longitudinals lacking protein, isoforms N/O/W/X/Y.